The following is a 380-amino-acid chain: Queuine tRNA-ribosyltransferase (380 aa).

Asp95 acts as the Proton acceptor in catalysis. Substrate is bound by residues 95 to 99 (DSGGF), Asp149, Gln192, and Gly219. The tract at residues 250 to 256 (GVGSADA) is RNA binding. Residue Asp269 is the Nucleophile of the active site. The segment at 274–278 (TRIAR) is RNA binding; important for wobble base 34 recognition. Positions 307, 309, 312, and 338 each coordinate Zn(2+).

The protein belongs to the queuine tRNA-ribosyltransferase family. In terms of assembly, homodimer. Within each dimer, one monomer is responsible for RNA recognition and catalysis, while the other monomer binds to the replacement base PreQ1. Requires Zn(2+) as cofactor.

It carries out the reaction 7-aminomethyl-7-carbaguanine + guanosine(34) in tRNA = 7-aminomethyl-7-carbaguanosine(34) in tRNA + guanine. It functions in the pathway tRNA modification; tRNA-queuosine biosynthesis. In terms of biological role, catalyzes the base-exchange of a guanine (G) residue with the queuine precursor 7-aminomethyl-7-deazaguanine (PreQ1) at position 34 (anticodon wobble position) in tRNAs with GU(N) anticodons (tRNA-Asp, -Asn, -His and -Tyr). Catalysis occurs through a double-displacement mechanism. The nucleophile active site attacks the C1' of nucleotide 34 to detach the guanine base from the RNA, forming a covalent enzyme-RNA intermediate. The proton acceptor active site deprotonates the incoming PreQ1, allowing a nucleophilic attack on the C1' of the ribose to form the product. After dissociation, two additional enzymatic reactions on the tRNA convert PreQ1 to queuine (Q), resulting in the hypermodified nucleoside queuosine (7-(((4,5-cis-dihydroxy-2-cyclopenten-1-yl)amino)methyl)-7-deazaguanosine). This Lactiplantibacillus plantarum (strain ATCC BAA-793 / NCIMB 8826 / WCFS1) (Lactobacillus plantarum) protein is Queuine tRNA-ribosyltransferase.